Here is an 886-residue protein sequence, read N- to C-terminus: Cytosolic carboxypeptidase-like protein 5 (886 aa).

The Peptidase M14 domain maps to 157–570 (YPFSYSDCQD…AMAIAALDMA (414 aa)). Zn(2+) contacts are provided by His252 and Glu255. Polar residues predominate over residues 344-353 (AKSPTNQQPT). 2 disordered regions span residues 344 to 363 (AKSP…APLS) and 374 to 401 (EAHL…KTDP). His434 provides a ligand contact to Zn(2+). Glu516 acts as the Proton donor/acceptor in catalysis. Disordered stretches follow at residues 602–737 (GLTS…RNMG) and 783–846 (TRLQ…PAFS). Residues 621–635 (PKSNNSLPVSCSENA) are compositionally biased toward polar residues. The segment covering 643 to 654 (STGTSTGGSSSS) has biased composition (low complexity). Residues 655 to 666 (QQNSPQMKNSPS) are compositionally biased toward polar residues. Positions 714–737 (STTSSLAPSPTLASSGPTSSRNMG) are enriched in low complexity. A compositionally biased stretch (polar residues) spans 805–815 (SSPTSPIPQTR). A Phosphoserine modification is found at Ser841.

The protein belongs to the peptidase M14 family. Zn(2+) serves as cofactor. As to expression, widely expressed. Highly expressed in testis, and moderately in pituitary, brain, eye and kidney.

The protein localises to the cytoplasm. It is found in the cytosol. The protein resides in the nucleus. Its subcellular location is the cytoskeleton. It localises to the spindle. The protein localises to the midbody. It carries out the reaction gamma-L-glutamyl-L-glutamyl-[protein] + H2O = L-glutamyl-[protein] + L-glutamate. The enzyme catalyses (L-glutamyl)(n+1)-gamma-L-glutamyl-L-glutamyl-[protein] + H2O = (L-glutamyl)(n)-gamma-L-glutamyl-L-glutamyl-[protein] + L-glutamate. It catalyses the reaction C-terminal L-alpha-aminoacyl-L-glutamyl-[tubulin] + H2O = C-terminal L-alpha-aminoacyl-[tubulin] + L-glutamate. The catalysed reaction is C-terminal L-alpha-aminoacyl-L-glutamyl-L-glutamyl-[tubulin] + H2O = C-terminal L-alpha-aminoacyl-L-glutamyl-[tubulin] + L-glutamate. Its function is as follows. Metallocarboxypeptidase that mediates deglutamylation of tubulin and non-tubulin target proteins. Catalyzes the removal of polyglutamate side chains present on the gamma-carboxyl group of glutamate residues within the C-terminal tail of alpha- and beta-tubulin. Cleaves alpha- and gamma-linked polyglutamate tubulin side-chain, as well as the branching point glutamate. Also catalyzes the removal of alpha-linked glutamate residues from the carboxy-terminus of alpha-tubulin. Mediates deglutamylation of nucleotidyltransferase CGAS, leading to CGAS antiviral defense response activation. This is Cytosolic carboxypeptidase-like protein 5 from Mus musculus (Mouse).